A 416-amino-acid polypeptide reads, in one-letter code: Phosphoglycerate kinase (416 aa).

Residues 28 to 30 (DMN), Arg44, 65 to 68 (HQSR), Arg122, and Arg162 each bind substrate. Residues Glu337 and 362–365 (GGHI) each bind ATP.

It belongs to the phosphoglycerate kinase family. In terms of assembly, monomer.

The protein resides in the cytoplasm. It carries out the reaction (2R)-3-phosphoglycerate + ATP = (2R)-3-phospho-glyceroyl phosphate + ADP. It participates in carbohydrate degradation; glycolysis; pyruvate from D-glyceraldehyde 3-phosphate: step 2/5. This Methanosarcina mazei (strain ATCC BAA-159 / DSM 3647 / Goe1 / Go1 / JCM 11833 / OCM 88) (Methanosarcina frisia) protein is Phosphoglycerate kinase.